We begin with the raw amino-acid sequence, 248 residues long: PF03932 family protein CutC (248 aa).

The protein belongs to the CutC family. In terms of assembly, homodimer.

The protein resides in the cytoplasm. The sequence is that of PF03932 family protein CutC from Salmonella paratyphi B (strain ATCC BAA-1250 / SPB7).